The following is a 1363-amino-acid chain: Kinesin-like protein kif7 (1363 aa).

In terms of domain architecture, Kinesin motor spans 15-347 (AVQVAVRVRP…LNYAKRARNI (333 aa)). Residue 94–101 (GQTGSGKT) participates in ATP binding. 2 coiled-coil regions span residues 358–385 (EPDR…SETR) and 491–552 (EDWR…LLAQ). A compositionally biased stretch (polar residues) spans 603–622 (DSSSYSEQTQWDGTHGNTHC). Residues 603–642 (DSSSYSEQTQWDGTHGNTHCESSRKLNRDEDGHMQTTRDK) form a disordered region. Residues 623 to 640 (ESSRKLNRDEDGHMQTTR) show a composition bias toward basic and acidic residues. 2 coiled-coil regions span residues 714–1068 (LLQA…AAIE) and 1116–1225 (DKVV…LREM). Residues 1314 to 1346 (IVQPGMNSTHWSGSTSLPVTRPRREPRRSSLNT) are disordered. Residues 1318–1331 (GMNSTHWSGSTSLP) are compositionally biased toward polar residues.

It belongs to the TRAFAC class myosin-kinesin ATPase superfamily. Kinesin family. KIF27 subfamily. In terms of assembly, binds microtubules. Interacts with gli1 and sufu.

It localises to the cytoplasm. The protein resides in the cytoskeleton. It is found in the cell projection. The protein localises to the cilium. Acts downstream of smo as an intracellular repressor of hedgehog signaling pathway, mainly through the suppression of gli1 activity. This negative regulatory effect is enhanced in conjunction with the suppressor of fused (sufu) protein. Positively regulates gli2a activity by promoting its dissociation from sufu. Involved in the regulation of microtubular dynamics. In Danio rerio (Zebrafish), this protein is Kinesin-like protein kif7 (kif7).